The chain runs to 602 residues: Glutamate-rich protein 6 (602 aa).

The tract at residues 22 to 67 (LRPRLTSVSSPSLSSTPPPSPLSSPSWSEEELPAPRSDGSPASSIS) is disordered. Residues 25–36 (RLTSVSSPSLSS) show a composition bias toward low complexity.

This sequence belongs to the ERICH6 family.

It localises to the nucleus. The sequence is that of Glutamate-rich protein 6 (Erich6) from Rattus norvegicus (Rat).